Here is a 363-residue protein sequence, read N- to C-terminus: Endopolygalacturonase B (363 aa).

Residues 1–20 (MQLLQSSVIAATVGAALVAA) form the signal peptide. The propeptide occupies 21-28 (VPVELKAR). Cys31 and Cys46 are oxidised to a cystine. PbH1 repeat units follow at residues 158 to 187 (SDNLNITDVTIDNSAGTAEGHNTDAFDVGS), 188 to 209 (STYINIDGATVYNQDDCLAINS), 210 to 230 (GSHITFTNGYCDGGHGLSIGS), 239 to 260 (VEDVTISNSKVVNSQNGVRIKT), 268 to 290 (VSNVKFEDITLSGITKYGLIVEQ), and 302 to 347 (TNGI…SITG). A glycan (N-linked (GlcNAc...) asparagine) is linked at Asn162. Asp202 acts as the Proton donor in catalysis. A disulfide bond links Cys204 and Cys220. Residue His224 is part of the active site. 2 disulfides stabilise this stretch: Cys330–Cys335 and Cys354–Cys363. A glycan (N-linked (GlcNAc...) asparagine) is linked at Asn356.

This sequence belongs to the glycosyl hydrolase 28 family.

The protein resides in the secreted. The enzyme catalyses (1,4-alpha-D-galacturonosyl)n+m + H2O = (1,4-alpha-D-galacturonosyl)n + (1,4-alpha-D-galacturonosyl)m.. Functionally, involved in maceration and soft-rotting of plant tissue. Hydrolyzes the 1,4-alpha glycosidic bonds of de-esterified pectate in the smooth region of the plant cell wall. This Aspergillus oryzae (strain ATCC 42149 / RIB 40) (Yellow koji mold) protein is Endopolygalacturonase B (pgaB).